A 455-amino-acid chain; its full sequence is Probable glycine dehydrogenase (decarboxylating) subunit 1 (455 aa).

Belongs to the GcvP family. N-terminal subunit subfamily. As to quaternary structure, the glycine cleavage system is composed of four proteins: P, T, L and H. In this organism, the P 'protein' is a heterodimer of two subunits.

It catalyses the reaction N(6)-[(R)-lipoyl]-L-lysyl-[glycine-cleavage complex H protein] + glycine + H(+) = N(6)-[(R)-S(8)-aminomethyldihydrolipoyl]-L-lysyl-[glycine-cleavage complex H protein] + CO2. Functionally, the glycine cleavage system catalyzes the degradation of glycine. The P protein binds the alpha-amino group of glycine through its pyridoxal phosphate cofactor; CO(2) is released and the remaining methylamine moiety is then transferred to the lipoamide cofactor of the H protein. The chain is Probable glycine dehydrogenase (decarboxylating) subunit 1 from Francisella philomiragia subsp. philomiragia (strain ATCC 25017 / CCUG 19701 / FSC 153 / O#319-036).